A 229-amino-acid polypeptide reads, in one-letter code: Transmembrane emp24 domain-containing protein 5 (229 aa).

Residues 1-27 (MGGRMWLPFPVLLLSALPAALLRGAAG) form the signal peptide. Over 28 to 196 (FTPSLDSDFT…IQESNFDRVN (169 aa)) the chain is Lumenal. The region spanning 45 to 126 (KECFYQPMPL…EKVIFFELIL (82 aa)) is the GOLD domain. The helical transmembrane segment at 197–217 (FWSVVNLMVMVVVSAIQVYTL) threads the bilayer. Residues 218 to 229 (KSLFEDKRKSRT) are Cytoplasmic-facing.

The protein belongs to the EMP24/GP25L family. In terms of assembly, interacts with TMED9 and TMED10.

The protein localises to the endoplasmic reticulum membrane. Its subcellular location is the golgi apparatus. The protein resides in the cis-Golgi network membrane. It is found in the endoplasmic reticulum-Golgi intermediate compartment membrane. Potential role in vesicular protein trafficking, mainly in the early secretory pathway. Required for the maintenance of the Golgi apparatus; involved in protein exchange between Golgi stacks during assembly. Probably not required for COPI-vesicle-mediated retrograde transport. In Mus musculus (Mouse), this protein is Transmembrane emp24 domain-containing protein 5 (Tmed5).